We begin with the raw amino-acid sequence, 235 residues long: Peroxisomal membrane protein 11C (235 aa).

Topologically, residues 1-91 are cytoplasmic; it reads MSTLETTRAE…LPLVLLGKSK (91 aa). A helical transmembrane segment spans residues 92-108; sequence NALLSTFLFLDQIVWLG. The Lumenal portion of the chain corresponds to 109–206; that stretch reads RTGIYKDKER…LLQLAPKKVT (98 aa). A helical transmembrane segment spans residues 207 to 226; the sequence is PRVTGAFGFASSLISCYQLL. The Cytoplasmic segment spans residues 227-235; sequence PSHPKSKMV.

It belongs to the peroxin-11 family. Homooligomer. Interacts with ARC5 and FIS1B on peroxisomes. Expressed in roots and developing siliques.

Its subcellular location is the peroxisome membrane. Involved in peroxisomal proliferation. Promotes peroxisomal duplication, aggregation or elongation without fission. This chain is Peroxisomal membrane protein 11C (PEX11C), found in Arabidopsis thaliana (Mouse-ear cress).